A 374-amino-acid polypeptide reads, in one-letter code: Isocitrate dehydrogenase [NAD] catalytic subunit 5, mitochondrial (374 aa).

The N-terminal 44 residues, 1 to 44 (MTMAANLARRLIGNRSTQILGAVNSSSGAASSVARAFCSSTTPI), are a transit peptide targeting the mitochondrion. Substrate-binding residues include Arg127, Arg137, Arg158, and Asp245. Asp245, Asp269, and Asp273 together coordinate Mg(2+).

It belongs to the isocitrate and isopropylmalate dehydrogenases family. As to quaternary structure, heterooligomer of catalytic and regulatory subunits. It depends on Mg(2+) as a cofactor. Mn(2+) is required as a cofactor. As to expression, ubiquitous.

The protein localises to the mitochondrion. It carries out the reaction D-threo-isocitrate + NAD(+) = 2-oxoglutarate + CO2 + NADH. Performs an essential role in the oxidative function of the citric acid cycle. The sequence is that of Isocitrate dehydrogenase [NAD] catalytic subunit 5, mitochondrial (IDH5) from Arabidopsis thaliana (Mouse-ear cress).